We begin with the raw amino-acid sequence, 301 residues long: Small ribosomal subunit protein uS3 (301 aa).

The 69-residue stretch at 39–107 folds into the KH type-2 domain; the sequence is VREYLKAKLK…PVAVNIEEVR (69 aa). The tract at residues 211–301 is disordered; that stretch reads GESPGAKLDA…AAAADGTKTE (91 aa). A compositionally biased stretch (basic and acidic residues) spans 224 to 244; sequence DEERKPRGPRRDARPGSDRPA. Positions 245 to 257 are enriched in low complexity; it reads PRGARAPRAPAGG.

Belongs to the universal ribosomal protein uS3 family. Part of the 30S ribosomal subunit. Forms a tight complex with proteins S10 and S14.

Its function is as follows. Binds the lower part of the 30S subunit head. Binds mRNA in the 70S ribosome, positioning it for translation. This is Small ribosomal subunit protein uS3 from Polaromonas sp. (strain JS666 / ATCC BAA-500).